The following is a 180-amino-acid chain: UPF0340 protein llmg_0465 (180 aa).

Belongs to the UPF0340 family.

In Lactococcus lactis subsp. cremoris (strain MG1363), this protein is UPF0340 protein llmg_0465.